The chain runs to 104 residues: N(4)-acetylcytidine amidohydrolase (104 aa).

The 97-residue stretch at 6–102 (TFYTRFQQDI…ELYVIAFKKV (97 aa)) folds into the ASCH domain. The Proton acceptor role is filled by Lys20. Thr23 (nucleophile) is an active-site residue. The Proton donor role is filled by Glu73.

It belongs to the N(4)-acetylcytidine amidohydrolase family.

It carries out the reaction N(4)-acetylcytidine + H2O = cytidine + acetate + H(+). The enzyme catalyses N(4)-acetyl-2'-deoxycytidine + H2O = 2'-deoxycytidine + acetate + H(+). It catalyses the reaction N(4)-acetylcytosine + H2O = cytosine + acetate + H(+). In terms of biological role, catalyzes the hydrolysis of N(4)-acetylcytidine (ac4C). In Cronobacter sakazakii (strain ATCC BAA-894) (Enterobacter sakazakii), this protein is N(4)-acetylcytidine amidohydrolase.